A 563-amino-acid polypeptide reads, in one-letter code: Membrane protein insertase YidC (563 aa).

A helical membrane pass occupies residues Thr6–His26. Positions Pro36–Ala70 are disordered. Positions Ala54–Ala70 are enriched in low complexity. 4 helical membrane passes run Trp373–Ala393, Leu443–Val463, Pro482–Pro502, and Val512–Val532.

The protein belongs to the OXA1/ALB3/YidC family. Type 1 subfamily. Interacts with the Sec translocase complex via SecD. Specifically interacts with transmembrane segments of nascent integral membrane proteins during membrane integration.

It localises to the cell inner membrane. In terms of biological role, required for the insertion and/or proper folding and/or complex formation of integral membrane proteins into the membrane. Involved in integration of membrane proteins that insert both dependently and independently of the Sec translocase complex, as well as at least some lipoproteins. Aids folding of multispanning membrane proteins. This chain is Membrane protein insertase YidC, found in Bordetella parapertussis (strain 12822 / ATCC BAA-587 / NCTC 13253).